The chain runs to 58 residues: Large ribosomal subunit protein uL30 (58 aa).

The protein belongs to the universal ribosomal protein uL30 family. As to quaternary structure, part of the 50S ribosomal subunit.

This is Large ribosomal subunit protein uL30 from Pseudomonas entomophila (strain L48).